A 341-amino-acid chain; its full sequence is Biotin synthase (341 aa).

The region spanning asparagine 40–alanine 264 is the Radical SAM core domain. 3 residues coordinate [4Fe-4S] cluster: cysteine 55, cysteine 59, and cysteine 62. The [2Fe-2S] cluster site is built by cysteine 99, cysteine 132, cysteine 192, and arginine 262. Residues alanine 317 to alanine 341 form a disordered region.

Belongs to the radical SAM superfamily. Biotin synthase family. As to quaternary structure, homodimer. [4Fe-4S] cluster serves as cofactor. [2Fe-2S] cluster is required as a cofactor.

The catalysed reaction is (4R,5S)-dethiobiotin + (sulfur carrier)-SH + 2 reduced [2Fe-2S]-[ferredoxin] + 2 S-adenosyl-L-methionine = (sulfur carrier)-H + biotin + 2 5'-deoxyadenosine + 2 L-methionine + 2 oxidized [2Fe-2S]-[ferredoxin]. The protein operates within cofactor biosynthesis; biotin biosynthesis; biotin from 7,8-diaminononanoate: step 2/2. Functionally, catalyzes the conversion of dethiobiotin (DTB) to biotin by the insertion of a sulfur atom into dethiobiotin via a radical-based mechanism. This is Biotin synthase from Renibacterium salmoninarum (strain ATCC 33209 / DSM 20767 / JCM 11484 / NBRC 15589 / NCIMB 2235).